The primary structure comprises 364 residues: Apelin receptor (364 aa).

At M1 to L39 the chain is on the extracellular side. A glycan (N-linked (GlcNAc...) asparagine) is linked at N21. 2 cysteine pairs are disulfide-bonded: C28/C288 and C110/C187. Residues L40–F60 form a helical membrane-spanning segment. Over T61–N78 the chain is Cytoplasmic. Residues L79–L99 form a helical membrane-spanning segment. At G100–L112 the chain is on the extracellular side. Residues S113–F133 traverse the membrane as a helical segment. The Cytoplasmic portion of the chain corresponds to D134–S153. Residues I154–I174 traverse the membrane as a helical segment. Topologically, residues L175–N201 are extracellular. N183 carries an N-linked (GlcNAc...) asparagine glycan. The chain crosses the membrane as a helical span at residues F202–L222. Topologically, residues M223 to R250 are cytoplasmic. A helical membrane pass occupies residues L251 to I271. Topologically, residues L272–H298 are extracellular. The helical transmembrane segment at P299–F319 threads the bilayer. Topologically, residues D320–V364 are cytoplasmic.

Belongs to the G-protein coupled receptor 1 family.

The protein localises to the cell membrane. Its function is as follows. G protein-coupled receptor for peptide hormones apelin (apln) and apelin receptor early endogenous ligand (apela), that plays a role in the regulation of normal cardiovascular function and fluid homeostasis. When acting as apelin receptor, activates both G(i) protein pathway that inhibits adenylate cyclase activity, and the beta-arrestin pathway that promotes internalization of the receptor. Also functions as mechanoreceptor that is activated by pathological stimuli in a G-protein-independent fashion to induce beta-arrestin signaling, hence eliciting cardiac hypertrophy. However, the presence of apelin ligand blunts cardiac hypertrophic induction from APLNR/APJ on response to pathological stimuli. Plays a key role in early development such as gastrulation, blood vessels formation and heart morphogenesis by acting as a receptor for apela hormone, promoting endoderm and mesendoderm cell migration and regulating the migration of cells fated to become myocardial progenitors, respectively. Promotes angioblast migration toward the embryonic midline, i.e. the position of the future vessel formation, during vasculogenesis. May promote sinus venosus (SV)-derived endothelial cells migration into the developing heart to promote coronary blood vessel development. Required for cardiovascular development, particularly for intersomitic vein angiogenesis. Plays also a role in various processes in adults such as regulation of blood vessel formation, blood pressure, heart contractility, and heart failure. Acts upstream of the i/o type of G-alpha proteins in the differentiation of endothelium, erythroid cells, myeloid cells and cardiomyocytes. This Xenopus tropicalis (Western clawed frog) protein is Apelin receptor (aplnr).